Reading from the N-terminus, the 827-residue chain is Transcription factor SOX-6 (827 aa).

Positions 1–10 (MSSKQATSPF) are enriched in polar residues. Residues 1–51 (MSSKQATSPFACTVDGEETMTQDLTSREKEEGSDQHPASHLPLHPIMHNKP) are disordered. Residues 25 to 34 (TSREKEEGSD) are compositionally biased toward basic and acidic residues. The residue at position 119 (Thr119) is a Phosphothreonine. Positions 184 to 257 (LAEKERQLST…QHKINLLQQQ (74 aa)) form a coiled coil. 2 disordered regions span residues 329 to 360 (HVSH…GGHS) and 380 to 470 (SPGA…PIGG). Positions 341–357 (GISDRLGRNLDPYEHGG) are enriched in basic and acidic residues. Residue Ser399 is modified to Phosphoserine. Thr401 carries the phosphothreonine modification. Residues Lys404 and Lys417 each participate in a glycyl lysine isopeptide (Lys-Gly) (interchain with G-Cter in SUMO) cross-link. Polar residues-rich tracts occupy residues 421-431 (TAQPLNLSSRP) and 439-461 (SPTS…LPNK). Residues Ser439 and Ser442 each carry the phosphoserine modification. Residues 620–688 (IKRPMNAFMV…IHLEKYPNYK (69 aa)) constitute a DNA-binding region (HMG box). Disordered stretches follow at residues 752–772 (TPSP…EPSL) and 786–827 (ASLA…VSAN). A compositionally biased stretch (acidic residues) spans 795-808 (NGEDEMEAYDDYED).

Homodimer. Interacts with DAZAP2. May interact with CENPK. Sumoylation inhibits the transcriptional activity.

The protein localises to the nucleus. It localises to the cytoplasm. In terms of biological role, transcription factor that plays a key role in several developmental processes, including neurogenesis, chondrocytes differentiation and cartilage formation. Specifically binds the 5'-AACAAT-3' DNA motif present in enhancers and super-enhancers and promotes expression of genes important for chondrogenesis. Required for overt chondrogenesis when condensed prechondrocytes differentiate into early stage chondrocytes: SOX5 and SOX6 cooperatively bind with SOX9 on active enhancers and super-enhancers associated with cartilage-specific genes, and thereby potentiate SOX9's ability to transactivate. Not involved in precartilaginous condensation, the first step in chondrogenesis, during which skeletal progenitors differentiate into prechondrocytes. Together with SOX5, required to form and maintain a pool of highly proliferating chondroblasts between epiphyses and metaphyses, to form columnar chondroblasts, delay chondrocyte prehypertrophy but promote hypertrophy, and to delay terminal differentiation of chondrocytes on contact with ossification fronts. Binds to the proximal promoter region of the myelin protein MPZ gene, and is thereby involved in the differentiation of oligodendroglia in the developing spinal tube. Binds to the gene promoter of MBP and acts as a transcriptional repressor. The protein is Transcription factor SOX-6 of Rattus norvegicus (Rat).